The following is a 165-amino-acid chain: MTSIAVCPGSFDPVTLGHLDIIQRGANVFDEVIVAVLHNRNKVPLFSVEERLELLKKATEHIPNVTIDSFNGLLIDYVKQKQAKAIIRGLRAVSDFEYEMQAASINKKLGPDVETFFMMTSNQYSYLSSSIVKEVAKYEADVSDIVPPVVAEALKAKFSSSPRNK.

A substrate-binding site is contributed by Ser10. ATP is bound by residues 10–11 and His18; that span reads SF. 3 residues coordinate substrate: Lys42, Leu74, and Arg88. ATP-binding positions include 89-91, Glu99, and 124-130; these read GLR and YSYLSSS.

Belongs to the bacterial CoaD family. Homohexamer. Requires Mg(2+) as cofactor.

The protein resides in the cytoplasm. The catalysed reaction is (R)-4'-phosphopantetheine + ATP + H(+) = 3'-dephospho-CoA + diphosphate. It participates in cofactor biosynthesis; coenzyme A biosynthesis; CoA from (R)-pantothenate: step 4/5. In terms of biological role, reversibly transfers an adenylyl group from ATP to 4'-phosphopantetheine, yielding dephospho-CoA (dPCoA) and pyrophosphate. This Halalkalibacterium halodurans (strain ATCC BAA-125 / DSM 18197 / FERM 7344 / JCM 9153 / C-125) (Bacillus halodurans) protein is Phosphopantetheine adenylyltransferase.